Consider the following 145-residue polypeptide: Probable D-aminoacyl-tRNA deacylase (145 aa).

The protein belongs to the DTD family. As to quaternary structure, homodimer.

The protein localises to the cytoplasm. It carries out the reaction glycyl-tRNA(Ala) + H2O = tRNA(Ala) + glycine + H(+). The enzyme catalyses a D-aminoacyl-tRNA + H2O = a tRNA + a D-alpha-amino acid + H(+). Functionally, an aminoacyl-tRNA editing enzyme that deacylates mischarged D-aminoacyl-tRNAs. Also deacylates mischarged glycyl-tRNA(Ala), protecting cells against glycine mischarging by AlaRS. Acts via tRNA-based rather than protein-based catalysis; rejects L-amino acids rather than detecting D-amino acids in the active site. By recycling D-aminoacyl-tRNA to D-amino acids and free tRNA molecules, this enzyme counteracts the toxicity associated with the formation of D-aminoacyl-tRNA entities in vivo and helps enforce protein L-homochirality. The chain is Probable D-aminoacyl-tRNA deacylase from Shigella flexneri serotype 5b (strain 8401).